A 279-amino-acid chain; its full sequence is Thymidylate synthase (279 aa).

Arginine 37 provides a ligand contact to dUMP. Residue histidine 67 coordinates (6R)-5,10-methylene-5,6,7,8-tetrahydrofolate. DUMP is bound at residue 142 to 143 (RR). Catalysis depends on cysteine 162, which acts as the Nucleophile. DUMP contacts are provided by residues 182–185 (RSAD), asparagine 193, and 223–225 (HLY). A (6R)-5,10-methylene-5,6,7,8-tetrahydrofolate-binding site is contributed by aspartate 185. Position 278 (serine 278) interacts with (6R)-5,10-methylene-5,6,7,8-tetrahydrofolate.

This sequence belongs to the thymidylate synthase family. Bacterial-type ThyA subfamily. As to quaternary structure, homodimer.

Its subcellular location is the cytoplasm. It catalyses the reaction dUMP + (6R)-5,10-methylene-5,6,7,8-tetrahydrofolate = 7,8-dihydrofolate + dTMP. The protein operates within pyrimidine metabolism; dTTP biosynthesis. In terms of biological role, catalyzes the reductive methylation of 2'-deoxyuridine-5'-monophosphate (dUMP) to 2'-deoxythymidine-5'-monophosphate (dTMP) while utilizing 5,10-methylenetetrahydrofolate (mTHF) as the methyl donor and reductant in the reaction, yielding dihydrofolate (DHF) as a by-product. This enzymatic reaction provides an intracellular de novo source of dTMP, an essential precursor for DNA biosynthesis. The polypeptide is Thymidylate synthase (Caulobacter vibrioides (strain ATCC 19089 / CIP 103742 / CB 15) (Caulobacter crescentus)).